A 161-amino-acid polypeptide reads, in one-letter code: Nucleotide-binding protein Mmc1_1670 (161 aa).

This sequence belongs to the YajQ family.

In terms of biological role, nucleotide-binding protein. The polypeptide is Nucleotide-binding protein Mmc1_1670 (Magnetococcus marinus (strain ATCC BAA-1437 / JCM 17883 / MC-1)).